A 311-amino-acid polypeptide reads, in one-letter code: tRNA N6-adenosine threonylcarbamoyltransferase (311 aa).

Residues histidine 108 and histidine 112 each coordinate Fe cation. Substrate-binding positions include 130 to 134 (LVSGG), aspartate 163, glycine 176, aspartate 180, and asparagine 270. Aspartate 294 contacts Fe cation.

It belongs to the KAE1 / TsaD family. It depends on Fe(2+) as a cofactor.

It is found in the cytoplasm. The enzyme catalyses L-threonylcarbamoyladenylate + adenosine(37) in tRNA = N(6)-L-threonylcarbamoyladenosine(37) in tRNA + AMP + H(+). Its function is as follows. Required for the formation of a threonylcarbamoyl group on adenosine at position 37 (t(6)A37) in tRNAs that read codons beginning with adenine. Is involved in the transfer of the threonylcarbamoyl moiety of threonylcarbamoyl-AMP (TC-AMP) to the N6 group of A37, together with TsaE and TsaB. TsaD likely plays a direct catalytic role in this reaction. This chain is tRNA N6-adenosine threonylcarbamoyltransferase, found in Metamycoplasma arthritidis (strain 158L3-1) (Mycoplasma arthritidis).